A 117-amino-acid chain; its full sequence is Large ribosomal subunit protein eL8 (117 aa).

It belongs to the eukaryotic ribosomal protein eL8 family. Part of the 50S ribosomal subunit. Probably part of the RNase P complex.

The protein localises to the cytoplasm. Its function is as follows. Multifunctional RNA-binding protein that recognizes the K-turn motif in ribosomal RNA, the RNA component of RNase P, box H/ACA, box C/D and box C'/D' sRNAs. The sequence is that of Large ribosomal subunit protein eL8 from Methanococcus aeolicus (strain ATCC BAA-1280 / DSM 17508 / OCM 812 / Nankai-3).